A 260-amino-acid chain; its full sequence is NAD-capped RNA hydrolase NudC (260 aa).

Substrate-binding residues include lysine 25 and arginine 69. Zn(2+) is bound by residues cysteine 98 and cysteine 101. Glutamate 111 contributes to the substrate binding site. Positions 116 and 119 each coordinate Zn(2+). Tyrosine 124 provides a ligand contact to substrate. A Nudix hydrolase domain is found at 125 to 248 (PQIAPCVIVA…TVARRLIEDT (124 aa)). A divalent metal cation contacts are provided by alanine 158, glutamate 174, and glutamate 178. The Nudix box motif lies at 159-180 (GFVEVGETLEQAVSREVLEESN). 192–199 (QPWPFPHS) is a substrate binding site. Glutamate 219 serves as a coordination point for a divalent metal cation. Position 241 (alanine 241) interacts with substrate.

It belongs to the Nudix hydrolase family. NudC subfamily. In terms of assembly, homodimer. The cofactor is Mg(2+). Requires Mn(2+) as cofactor. It depends on Zn(2+) as a cofactor.

The enzyme catalyses a 5'-end NAD(+)-phospho-ribonucleoside in mRNA + H2O = a 5'-end phospho-adenosine-phospho-ribonucleoside in mRNA + beta-nicotinamide D-ribonucleotide + 2 H(+). It catalyses the reaction NAD(+) + H2O = beta-nicotinamide D-ribonucleotide + AMP + 2 H(+). The catalysed reaction is NADH + H2O = reduced beta-nicotinamide D-ribonucleotide + AMP + 2 H(+). MRNA decapping enzyme that specifically removes the nicotinamide adenine dinucleotide (NAD) cap from a subset of mRNAs by hydrolyzing the diphosphate linkage to produce nicotinamide mononucleotide (NMN) and 5' monophosphate mRNA. The NAD-cap is present at the 5'-end of some mRNAs and stabilizes RNA against 5'-processing. Has preference for mRNAs with a 5'-end purine. Catalyzes the hydrolysis of a broad range of dinucleotide pyrophosphates. This Yersinia pestis bv. Antiqua (strain Antiqua) protein is NAD-capped RNA hydrolase NudC.